Reading from the N-terminus, the 447-residue chain is UDP-N-acetylmuramate--L-alanine ligase (447 aa).

Residue 108-114 (GSHGKTS) participates in ATP binding.

Belongs to the MurCDEF family.

The protein resides in the cytoplasm. The enzyme catalyses UDP-N-acetyl-alpha-D-muramate + L-alanine + ATP = UDP-N-acetyl-alpha-D-muramoyl-L-alanine + ADP + phosphate + H(+). The protein operates within cell wall biogenesis; peptidoglycan biosynthesis. Its function is as follows. Cell wall formation. The protein is UDP-N-acetylmuramate--L-alanine ligase of Listeria monocytogenes serotype 4a (strain HCC23).